The following is a 444-amino-acid chain: F-box protein At1g53790 (444 aa).

The F-box domain maps to 76–125 (VSCFRYIPIDLLMDIFSRVPAKSIARFRCVSKLWESILCRPDFKELFMTM).

The polypeptide is F-box protein At1g53790 (Arabidopsis thaliana (Mouse-ear cress)).